A 394-amino-acid polypeptide reads, in one-letter code: Dihydroorotase (394 aa).

His15, His17, Lys98, His135, His175, and Asp245 together coordinate Zn(2+). Lys98 is subject to N6-carboxylysine.

This sequence belongs to the metallo-dependent hydrolases superfamily. DHOase family. Class II DHOase subfamily. Zn(2+) is required as a cofactor.

It catalyses the reaction (S)-dihydroorotate + H2O = N-carbamoyl-L-aspartate + H(+). The protein operates within pyrimidine metabolism; UMP biosynthesis via de novo pathway; (S)-dihydroorotate from bicarbonate: step 3/3. This chain is Dihydroorotase (PYR3), found in Mycosarcoma maydis (Corn smut fungus).